The following is a 614-amino-acid chain: Zinc finger protein ztf-7 (614 aa).

Positions 1–10 (MSTSGSGGGN) are enriched in gly residues. A disordered region spans residues 1–160 (MSTSGSGGGN…SRPKKPEKMS (160 aa)). The span at 18–41 (NVASSPNANPKKNADTESSGGSKN) shows a compositional bias: polar residues. Over residues 54–69 (GSNSRNGSRTNSVSNS) the composition is skewed to low complexity. Positions 74-83 (NRKDWTDRKS) are enriched in basic and acidic residues. The span at 132–150 (DYSDEYELDEPFSDSDDED) shows a compositional bias: acidic residues. C2H2-type zinc fingers lie at residues 356–380 (NECI…KRNH) and 447–470 (VVCL…KTTH).

This sequence belongs to the ZNF277 family. As to quaternary structure, interacts with rps-2.

Its subcellular location is the cytoplasm. Its function is as follows. Probable transcription factor. Limits the ability to tolerate cold environment or cold-warm stress. In complex with rps-2, mediates the cold-warm shock response by promoting translocation of components of the RNA exosome from the nucleolus to nucleoplasm. This Caenorhabditis elegans protein is Zinc finger protein ztf-7.